We begin with the raw amino-acid sequence, 530 residues long: Na(+)/H(+) antiporter NhaB (530 aa).

A run of 12 helical transmembrane segments spans residues 13–33 (FLGK…VINP), 34–54 (LVFF…EFIF), 90–110 (LVAN…IYFM), 121–141 (ILIG…TAAF), 145–165 (FLDA…FYAI), 205–225 (LLIH…VGEP), 241–261 (FIIR…LTCI), 306–326 (GLIA…VGLI), 327–347 (GLSV…HSMG), 351–371 (EEAL…AVII), 455–475 (GQAA…QLSY), and 481–501 (MALP…IFFL).

It belongs to the NhaB Na(+)/H(+) (TC 2.A.34) antiporter family.

The protein localises to the cell inner membrane. It catalyses the reaction 2 Na(+)(in) + 3 H(+)(out) = 2 Na(+)(out) + 3 H(+)(in). Functionally, na(+)/H(+) antiporter that extrudes sodium in exchange for external protons. This chain is Na(+)/H(+) antiporter NhaB, found in Aliivibrio fischeri (strain MJ11) (Vibrio fischeri).